Consider the following 352-residue polypeptide: C-C chemokine receptor type 5 (352 aa).

The Extracellular portion of the chain corresponds to 1–30; sequence MDYQVSSPTYDIDYYTSEPCQKINVKQIAA. At Y3 the chain carries Sulfotyrosine. O-linked (GalNAc...) serine glycosylation is found at S6 and S7. 3 positions are modified to sulfotyrosine: Y10, Y14, and Y15. 2 cysteine pairs are disulfide-bonded: C20–C269 and C101–C178. A helical membrane pass occupies residues 31 to 58; sequence RLLPPLYSLVFIFGFVGNILVVLILINC. Topologically, residues 59–68 are cytoplasmic; the sequence is KRLKSMTDIY. The helical transmembrane segment at 69 to 89 threads the bilayer; the sequence is LLNLAISDLLFLLTVPFWAHY. At 90 to 102 the chain is on the extracellular side; the sequence is AAAQWDFGNTMCQ. Residues 103 to 124 form a helical membrane-spanning segment; it reads LLTGLYFIGFFSGIFFIILLTI. Topologically, residues 125 to 141 are cytoplasmic; sequence DRYLAIVHAVFALKART. Residues 142 to 166 traverse the membrane as a helical segment; it reads VTFGVVTSVITWVVAVFASLPGIIF. The Extracellular segment spans residues 167–198; it reads TRSQREGLHYTCSSHFPYSQYQFWKNFQTLKM. Residues 199–218 form a helical membrane-spanning segment; the sequence is VILGLVLPLLVMVICYSGIL. The Cytoplasmic portion of the chain corresponds to 219–235; sequence KTLLRCRNEKKRHRAVR. A helical membrane pass occupies residues 236 to 260; the sequence is LIFTIMIVYFLFWAPYNIVLLLNTF. Residues 261 to 277 are Extracellular-facing; sequence QEFFGLNNCSSSNRLDQ. Residues 278–301 traverse the membrane as a helical segment; that stretch reads AMQVTETLGMTHCCINPIIYAFVG. Topologically, residues 302–352 are cytoplasmic; the sequence is EKFRNYLLVFFQKHIAKRFCKCCSIFQQEAPERASSVYTRSTAEQEISVGL. Residues C321, C323, and C324 are each lipidated (S-palmitoyl cysteine). 4 positions are modified to phosphoserine; by BARK1: S336, S337, S342, and S349.

Belongs to the G-protein coupled receptor 1 family. In terms of assembly, interacts with PRAF2. Efficient ligand binding to CCL3/MIP-1alpha and CCL4/MIP-1beta requires sulfation, O-glycosylation and sialic acid modifications. Glycosylation on Ser-6 is required for efficient binding of CCL4. Interacts with GRK2. Interacts with ARRB1 and ARRB2. Interacts with CNIH4. Interacts with S100A4; this interaction stimulates T-lymphocyte chemotaxis. Post-translationally, sulfated on at least 2 of the N-terminal tyrosines. Sulfation is required for efficient binding of the chemokines, CCL3 and CCL4. Palmitoylation in the C-terminal is important for cell surface expression. In terms of processing, phosphorylation on serine residues in the C-terminal is stimulated by binding CC chemokines especially by APO-RANTES. Post-translationally, O-glycosylated, but not N-glycosylated. Ser-6 appears to be the major site even if Ser-7 may be also O-glycosylated. Also sialylated glycans present which contribute to chemokine binding. Thr-16 and Ser-17 may also be glycosylated and, if so, with small moieties such as a T-antigen.

The protein resides in the cell membrane. Functionally, receptor for a number of inflammatory CC-chemokines including CCL3/MIP-1-alpha, CCL4/MIP-1-beta and RANTES and subsequently transduces a signal by increasing the intracellular calcium ion level. May play a role in the control of granulocytic lineage proliferation or differentiation. Participates in T-lymphocyte migration to the infection site by acting as a chemotactic receptor. This Macaca arctoides (Stump-tailed macaque) protein is C-C chemokine receptor type 5 (CCR5).